The following is a 199-amino-acid chain: Early activation antigen CD69 (199 aa).

A disordered region spans residues 1–29 (MSSENCFVAENSSLHPESGQENDATSPHF). The Cytoplasmic segment spans residues 1-40 (MSSENCFVAENSSLHPESGQENDATSPHFSTRHEGSFQVP). The chain crosses the membrane as a helical; Signal-anchor for type II membrane protein span at residues 41 to 61 (VLCAVMNVVFITILIIALIAL). Residues 62-199 (SVGQYNCPGQ…LYWICNKPYK (138 aa)) lie on the Extracellular side of the membrane. Cystine bridges form between C85/C96, C113/C194, and C173/C186. In terms of domain architecture, C-type lectin spans 92 to 195 (YQRKCYFIST…CEKNLYWICN (104 aa)). Residue N166 is glycosylated (N-linked (GlcNAc...) asparagine).

As to quaternary structure, homodimer; disulfide-linked. Interacts with S100A8 and S100A9. Interacts with galactin-1/LGALS1. Interacts with S1PR1; this interaction mediates S1PR1 degradation. Constitutive Ser/Thr phosphorylation in both mature thymocytes and activated T-lymphocytes. As to expression, expressed on the surface of activated T-cells, B-cells, natural killer cells, neutrophils, eosinophils, epidermal Langerhans cells and platelets.

It localises to the cell membrane. Transmembrane protein expressed mainly on T-cells resident in mucosa that plays an essential role in immune cell homeostasis. Rapidly expressed on the surface of platelets, T-lymphocytes and NK cells upon activation by various stimuli, such as antigen recognition or cytokine signaling, stimulates different signaling pathways in different cell types. Negatively regulates Th17 cell differentiation through its carbohydrate dependent interaction with galectin-1/LGALS1 present on immature dendritic cells. Association of CD69 cytoplasmic tail with the JAK3/STAT5 signaling pathway regulates the transcription of RORgamma/RORC and, consequently, differentiation toward the Th17 lineage. Also acts via the S100A8/S100A9 complex present on peripheral blood mononuclear cells to promote the conversion of naive CD4 T-cells into regulatory T-cells. Acts as an oxidized low-density lipoprotein (oxLDL) receptor in CD4 T-lymphocytes and negatively regulates the inflammatory response by inducing the expression of PDCD1 through the activation of NFAT. Participates in adipose tissue-derived mesenchymal stem cells (ASCs)-mediated protection against P.aeruginosa infection. Mechanistically, specifically recognizes P.aeruginosa to promote ERK1 activation, followed by granulocyte-macrophage colony-stimulating factor (GM-CSF) and other inflammatory cytokines secretion. In eosinophils, induces IL-10 production through the ERK1/2 pathway. Negatively regulates the chemotactic responses of effector lymphocytes and dendritic cells (DCs) to sphingosine 1 phosphate/S1P by acting as a S1PR1 receptor agonist and facilitating the internalization and degradation of the receptor. This is Early activation antigen CD69 (CD69) from Homo sapiens (Human).